Here is a 556-residue protein sequence, read N- to C-terminus: MLNLCHALRGVRQFSCSVIVKVKCASCSIKLQDQDPSKPGYYTKPKSLPDSKLNPDLQDLKYLLFSQDIQLSKQATQNDPDLKTKRDLLLRVICKRCSNALHHNNYNPEEFPESTLNDILNYVPRGSNVMHIVPFVEFPLHLDPNVLKRNDLDTTLVLTKSDQVFKDKNAVSKKVPIFMKQFLKNTLRIDSNKTFAISALKNWNISMFYNYFKNYTYLLGNPNVGKSTLINTLLQKYLGYKVKIDSTGKINSPSEEVMQEAFTNPKNFFKIQAAGVSHIPNLTRSVQAYQVGGKILFDLPGYSTSTSRLRLEELIDERWLQRLRKTDLFNRKHIKQKTYESMKGTSQGGCYTVGGIFYLVPPKGSINQIVKYIPGPSKTFKNIEKGIDVFNSCNSSSGTHPLSRYCGIKSVICEKSQYKRYAIPPFIGSIEIVLKDIGYILLRTTGRYEFKGLHEIWIPRGIQVGIREPLENLIESGYQRYIETNGKESSCPRDRPIISSLYEMAPDEADTLNAVKKSYLEKTEKDLSARRFVDDDPYDLVQHLEKKKNPYWYYQW.

Residues 1–21 (MLNLCHALRGVRQFSCSVIVK) constitute a mitochondrion transit peptide. Positions 113-305 (ESTLNDILNY…LFDLPGYSTS (193 aa)) constitute a CP-type G domain.

Belongs to the TRAFAC class YlqF/YawG GTPase family. GEP3 subfamily.

It is found in the mitochondrion. In terms of biological role, interacts genetically with prohibitins and thus may be involved in the mitochondrial lipid metabolism. In Saccharomyces cerevisiae (strain ATCC 204508 / S288c) (Baker's yeast), this protein is Genetic interactor of prohibitins 3, mitochondrial (GEP3).